The sequence spans 120 residues: Flagellar protein FliT (120 aa).

The tract at residues 1-50 (MNDSSLSLKKWHALSALSNTMLSLAQSGKWDELIEQEVAYVSLVEKISIT) is required for homodimerization. The interval 59 to 97 (IQDQAMVMLNNVLQNEMTLKTLLQERMDELHGLMAQTGK) is fliD binding.

Belongs to the FliT family. In terms of assembly, homodimer. Interacts with FliD and FlhC.

The protein localises to the cytoplasm. The protein resides in the cytosol. Its function is as follows. Dual-function protein that regulates the transcription of class 2 flagellar operons and that also acts as an export chaperone for the filament-capping protein FliD. As a transcriptional regulator, acts as an anti-FlhDC factor; it directly binds FlhC, thus inhibiting the binding of the FlhC/FlhD complex to class 2 promoters, resulting in decreased expression of class 2 flagellar operons. As a chaperone, effects FliD transition to the membrane by preventing its premature polymerization, and by directing it to the export apparatus. This chain is Flagellar protein FliT, found in Enterobacter sp. (strain 638).